Reading from the N-terminus, the 282-residue chain is D-alanine aminotransferase (282 aa).

Substrate is bound at residue Tyr32. Arg51 provides a ligand contact to pyridoxal 5'-phosphate. Arg99 and His101 together coordinate substrate. The Proton acceptor role is filled by Lys146. N6-(pyridoxal phosphate)lysine is present on Lys146. Glu178 is a pyridoxal 5'-phosphate binding site.

It belongs to the class-IV pyridoxal-phosphate-dependent aminotransferase family. As to quaternary structure, homodimer. Pyridoxal 5'-phosphate serves as cofactor.

It catalyses the reaction D-alanine + 2-oxoglutarate = D-glutamate + pyruvate. Acts on the D-isomers of alanine, leucine, aspartate, glutamate, aminobutyrate, norvaline and asparagine. The enzyme transfers an amino group from a substrate D-amino acid to the pyridoxal phosphate cofactor to form pyridoxamine and an alpha-keto acid in the first half-reaction. The second half-reaction is the reverse of the first, transferring the amino group from the pyridoxamine to a second alpha-keto acid to form the product D-amino acid via a ping-pong mechanism. This is an important process in the formation of D-alanine and D-glutamate, which are essential bacterial cell wall components. The protein is D-alanine aminotransferase (dat) of Staphylococcus aureus (strain N315).